A 498-amino-acid polypeptide reads, in one-letter code: Cytochrome P450 monooxygenase apdB (498 aa).

Residues 20–40 (ASPQVFKLFVLILFVLLVLKI) traverse the membrane as a helical segment. Cys-457 is a binding site for heme.

Belongs to the cytochrome P450 family. It depends on heme as a cofactor.

The protein localises to the membrane. The protein operates within secondary metabolite biosynthesis. Its function is as follows. Cytochrome P450 monooxygenase; part of the gene cluster that mediates the biosynthesis of aspyridones. The polyketide-amino acid backbone preaspyridone A is first assembled by the PKS-NRPS hybrid apdA. The assembly of preaspyridone A is initiated by loading of malonyl-CoA onto apdA, followed by decarboxylation to yield the acetyl starter unit. The growing polyketide chain then elongates into a tetraketide. The adpA PKS module catalyzes three Claisen condensations, as well as beta-keto processing and methylation. Alpha-methylation step during polyketide synthesis is a prerequisite and a key checkpoint for chain transfer between PKS and NRPS modules. The downstream NRPS module contains the condensation (C), adenylation (A), and thiolation (T) domains and catalyzes the incorporation of tyrosine via the formation of the L-tyrosinyl-thioester and the amide linkage between L-tyrosinyl-thioester and the tetraketide. The bimodular assembly line is terminated with a reductase (R) domain that facilitates formation and release of the tetramic acid product. Because apdA lacks a designated enoylreductase (ER) domain, the required activity is provided the enoyl reductase apdC. ApdC appears to operate with different stereoselectivity in different PKS cycle. Combined with apdC, apdA is proposed to synthesize preaspyridone A via about 20 enzymatic steps. A number of oxidative steps performed successively by the cytochrome P450 monooxygenases apdE and apdB are required for the conversion of preaspyridone A to aspyridone A. The cytochrome P450 monooxygenase apdE is responsible for the oxidative dephenylation of preaspyridone A. Finally, the predicted FAD-dependent monooxygenase apdD and the acyl-CoA dehydrogenase apdG may be involved in the transformation of aspyridone A into aspyridone B. The sequence is that of Cytochrome P450 monooxygenase apdB from Emericella nidulans (strain FGSC A4 / ATCC 38163 / CBS 112.46 / NRRL 194 / M139) (Aspergillus nidulans).